The following is a 152-amino-acid chain: Protein SprT-like (152 aa).

In terms of domain architecture, SprT-like spans 7–148; sequence QRLVEEVSLQ…GKCKGKLNLI (142 aa). A Zn(2+)-binding site is contributed by His-67. Glu-68 is a catalytic residue. His-71 is a Zn(2+) binding site.

The protein belongs to the SprT family. The cofactor is Zn(2+).

The protein resides in the cytoplasm. In Bacillus anthracis (strain A0248), this protein is Protein SprT-like.